The primary structure comprises 501 residues: Sucrose transport protein SUT2 (501 aa).

The Cytoplasmic portion of the chain corresponds to 1-31 (MPRRPSGGGGGAGPAAAAVRKVPLRKLLRAA). A helical membrane pass occupies residues 32-52 (SVACGVQFGWALQLSLLTPYV). At 53-55 (QEL) the chain is on the extracellular side. The chain crosses the membrane as a helical span at residues 56–76 (GIPHAFASLVWLCGPLSGLLV). Residues 77–98 (QPLVGHLSDRIAPAASPLGRRR) are Cytoplasmic-facing. Residues 99–119 (PFIAAGAASIAAAVLTVGFSA) traverse the membrane as a helical segment. Topologically, residues 120 to 135 (DLGRIFGDSITPGSTR) are extracellular. The helical transmembrane segment at 136–156 (LGAIIVYLVGFWLLDVGNNAT) threads the bilayer. Residues 157–176 (QGPCRAFLADLTENDPRRTR) lie on the Cytoplasmic side of the membrane. Residues 177 to 197 (IANAYFSLFMALGNILGYATG) traverse the membrane as a helical segment. The Extracellular portion of the chain corresponds to 198 to 222 (AYSGWYKIFPFTVTPSCSISCANLK). Residues 223-243 (SAFLLDIIILVVTTCITVASV) form a helical membrane-spanning segment. The Cytoplasmic portion of the chain corresponds to 244–278 (QEPQSFGSDEADHPSTEQEAFLWELFGSFRYFTLP). A helical membrane pass occupies residues 279–299 (VWMVLIVTALTWIGWFPFILF). The Extracellular portion of the chain corresponds to 300–327 (DTDWMGREIYRGSPDDPSITQSYHDGVR). Residues 328 to 348 (MGSFGLMLNSVLLGFTSIVLE) traverse the membrane as a helical segment. At 349-356 (KLCRKWGA) the chain is on the cytoplasmic side. Residues 357 to 377 (GLVWGVSNILMALCFVAMLVI) form a helical membrane-spanning segment. The Extracellular portion of the chain corresponds to 378 to 394 (TYVAKNMDYPPSGVPPT). The helical transmembrane segment at 395 to 415 (GIVIASLVVFTILGAPLAITY) threads the bilayer. Topologically, residues 416-433 (SIPYAMAASRVENLGLGQ) are cytoplasmic. The chain crosses the membrane as a helical span at residues 434–454 (GLAMGILNLAIVIPQVIVSLG). At 455-467 (SGPWDQLFGGGNA) the chain is on the extracellular side. The helical transmembrane segment at 468–488 (PAFAVAAAASFIGGLVAILGL) threads the bilayer. Over 489 to 501 (PRARIASRRRGHR) the chain is Cytoplasmic.

The protein belongs to the glycoside-pentoside-hexuronide (GPH) cation symporter transporter (TC 2.A.2.4) family. As to quaternary structure, homodimer. In terms of tissue distribution, widely expressed.

The protein resides in the cell membrane. It participates in glycan biosynthesis; sucrose metabolism. In terms of biological role, responsible for the transport of sucrose into the cell, with the concomitant uptake of protons (symport system). May also transport other glucosides. The chain is Sucrose transport protein SUT2 (SUT2) from Oryza sativa subsp. japonica (Rice).